A 214-amino-acid chain; its full sequence is Adenylate kinase (214 aa).

ATP is bound at residue 10 to 15; the sequence is GAGKGT. Positions 30–59 are NMP; it reads STGDMLRAAVKAGTPLGLEAKKVMDAGQLV. Residues Thr31, Arg36, 57–59, 85–88, and Gln92 each bind AMP; these read QLV and GFPR. An LID region spans residues 122–159; sequence GRRVHPGSGRVYHIVFNQPKVEGKDDVTGEDLAIRPDD. ATP contacts are provided by residues Arg123 and 132–133; that span reads VY. Residues Arg156 and Arg167 each coordinate AMP. Gln200 provides a ligand contact to ATP.

This sequence belongs to the adenylate kinase family. As to quaternary structure, monomer.

Its subcellular location is the cytoplasm. It catalyses the reaction AMP + ATP = 2 ADP. The protein operates within purine metabolism; AMP biosynthesis via salvage pathway; AMP from ADP: step 1/1. Its function is as follows. Catalyzes the reversible transfer of the terminal phosphate group between ATP and AMP. Plays an important role in cellular energy homeostasis and in adenine nucleotide metabolism. The chain is Adenylate kinase from Shewanella halifaxensis (strain HAW-EB4).